Consider the following 344-residue polypeptide: Holliday junction branch migration complex subunit RuvB (344 aa).

Residues 1–181 (MERIVTPAEM…FGVLCAMEYY (181 aa)) form a large ATPase domain (RuvB-L) region. ATP-binding positions include Leu20, Arg21, Gly62, Lys65, Thr66, Thr67, 128-130 (EDY), Arg171, Tyr181, and Arg218. A Mg(2+)-binding site is contributed by Thr66. Residues 182–252 (DETQLKEIVI…EARDALELLE (71 aa)) form a small ATPAse domain (RuvB-S) region. Residues 255–344 (NQGFDKVDNK…SNKGQTSFFK (90 aa)) are head domain (RuvB-H). The DNA site is built by Arg310 and Arg315.

This sequence belongs to the RuvB family. As to quaternary structure, homohexamer. Forms an RuvA(8)-RuvB(12)-Holliday junction (HJ) complex. HJ DNA is sandwiched between 2 RuvA tetramers; dsDNA enters through RuvA and exits via RuvB. An RuvB hexamer assembles on each DNA strand where it exits the tetramer. Each RuvB hexamer is contacted by two RuvA subunits (via domain III) on 2 adjacent RuvB subunits; this complex drives branch migration. In the full resolvosome a probable DNA-RuvA(4)-RuvB(12)-RuvC(2) complex forms which resolves the HJ.

The protein localises to the cytoplasm. It catalyses the reaction ATP + H2O = ADP + phosphate + H(+). In terms of biological role, the RuvA-RuvB-RuvC complex processes Holliday junction (HJ) DNA during genetic recombination and DNA repair, while the RuvA-RuvB complex plays an important role in the rescue of blocked DNA replication forks via replication fork reversal (RFR). RuvA specifically binds to HJ cruciform DNA, conferring on it an open structure. The RuvB hexamer acts as an ATP-dependent pump, pulling dsDNA into and through the RuvAB complex. RuvB forms 2 homohexamers on either side of HJ DNA bound by 1 or 2 RuvA tetramers; 4 subunits per hexamer contact DNA at a time. Coordinated motions by a converter formed by DNA-disengaged RuvB subunits stimulates ATP hydrolysis and nucleotide exchange. Immobilization of the converter enables RuvB to convert the ATP-contained energy into a lever motion, pulling 2 nucleotides of DNA out of the RuvA tetramer per ATP hydrolyzed, thus driving DNA branch migration. The RuvB motors rotate together with the DNA substrate, which together with the progressing nucleotide cycle form the mechanistic basis for DNA recombination by continuous HJ branch migration. Branch migration allows RuvC to scan DNA until it finds its consensus sequence, where it cleaves and resolves cruciform DNA. In Clostridium botulinum (strain Eklund 17B / Type B), this protein is Holliday junction branch migration complex subunit RuvB.